The primary structure comprises 711 residues: Origin recognition complex subunit 3 (711 aa).

Residues serine 23 and serine 516 each carry the phosphoserine modification.

This sequence belongs to the ORC3 family. In terms of assembly, component of ORC, a complex composed of at least 6 subunits: ORC1, ORC2, ORC3, ORC4, ORC5 and ORC6. ORC is regulated in a cell-cycle dependent manner. It is sequentially assembled at the exit from anaphase of mitosis and disassembled as cells enter S phase. Post-translationally, multi-mono-ubiquitinated by OBI1; ubiquitination is important for efficient DNA replication origin site activation. Ubiquitination levels are low in mitotic and early G1-phAse cells and are induced in late G1-/early S-phase, peaking in S-phase and decrease toward the end of the cell cycle.

It localises to the nucleus. The protein resides in the chromosome. Component of the origin recognition complex (ORC) that binds origins of replication. DNA-binding is ATP-dependent. The specific DNA sequences that define origins of replication have not been identified yet. ORC is required to assemble the pre-replication complex necessary to initiate DNA replication. Binds histone H3 and H4 trimethylation marks H3K9me3, H3K27me3 and H4K20me3. In Homo sapiens (Human), this protein is Origin recognition complex subunit 3 (ORC3).